The sequence spans 341 residues: MKFLDQAKVYIRSGNGGAGAVSFRREKFIEFGGPDGGDGGRGGDVWALVVDGLNTLIDYRYQQHFRAKTGGHGKGRNMTGEKGNDIILKVPVGTQIFEEDNTTLICDLTEVGQRYRLAKGGNGGFGNLHFMNSTNQAPRRANPGLVGEERTLWLRLKLIADAGLIGLPNAGKSTFLASVTAAKPKVADYPFTTLYPHLGVARIDAREFVLADIPGLIEGAHEGVGLGDRFLGHIERCCVLFHLISAQEEDVAKAYQIVRNELKAYGNNLSDKTEIVAISQIDTLTLEERKVKQEVLQRVTGKSVMMFSAVSGESLEAMLRAGAHMIEMVRKEGVDRDVRTD.

One can recognise an Obg domain in the interval 1-159 (MKFLDQAKVY…RTLWLRLKLI (159 aa)). Residues 160–327 (ADAGLIGLPN…MLRAGAHMIE (168 aa)) form the OBG-type G domain. GTP is bound by residues 166–173 (GLPNAGKS), 191–195 (FTTLY), 212–215 (DIPG), 279–282 (SQID), and 308–310 (SAV). Mg(2+)-binding residues include serine 173 and threonine 193.

It belongs to the TRAFAC class OBG-HflX-like GTPase superfamily. OBG GTPase family. In terms of assembly, monomer. Requires Mg(2+) as cofactor.

It localises to the cytoplasm. Functionally, an essential GTPase which binds GTP, GDP and possibly (p)ppGpp with moderate affinity, with high nucleotide exchange rates and a fairly low GTP hydrolysis rate. Plays a role in control of the cell cycle, stress response, ribosome biogenesis and in those bacteria that undergo differentiation, in morphogenesis control. This is GTPase Obg from Bartonella quintana (strain Toulouse) (Rochalimaea quintana).